The chain runs to 183 residues: Ankyrin repeat domain-containing protein 39 (183 aa).

ANK repeat units lie at residues 30–59, 63–92, 96–125, and 129–158; these read DFERGIWSAALNGDLGRVKHLIQKAEDPSQ, AGYTALHYASRNGHYAVCQFLLESGAKCDA, GGATALHRASYCGHTEIARLLLSHGSNPRV, and DGMTSLHKAAERGHGDICSLLLQHSPALKA. A Phosphoserine modification is found at Ser-153.

This sequence belongs to the ANKRD39 family.

In Homo sapiens (Human), this protein is Ankyrin repeat domain-containing protein 39 (ANKRD39).